A 93-amino-acid polypeptide reads, in one-letter code: Small ribosomal subunit protein uS19 (93 aa).

This sequence belongs to the universal ribosomal protein uS19 family.

Its function is as follows. Protein S19 forms a complex with S13 that binds strongly to the 16S ribosomal RNA. This chain is Small ribosomal subunit protein uS19, found in Geobacter sulfurreducens (strain ATCC 51573 / DSM 12127 / PCA).